The primary structure comprises 290 residues: MNTPKKHKKFKAKMILQIIMVIIGGIIAAYGLETVLIPNSVSDGGVTGLSIVGSQLFNLPLGILIAVINIPFVWLGYKQIGKSFALLSIIGIVSLAAGTSFFHHTPAIIEGDTLLITVVGGIILGFGMGLALRNGGALDGIDMLAVLLSRKLPFGTSDLILFLNLFVFIFVSTVFGLQGALLSVIAYYIASKVIHVVEEGLSGSKTFQIITTQPELMVETIRDQLGRSATYKEAYGGFSHEKFKEITCVINRLEETKLKEIINDIDKTAFVTVYDVAEVKGSNFRNLNHH.

The next 5 membrane-spanning stretches (helical) occupy residues isoleucine 18–proline 38, leucine 56–glycine 76, serine 83–histidine 103, aspartate 112–leucine 132, and leucine 165–isoleucine 185.

The protein belongs to the UPF0750 family.

It is found in the cell membrane. The protein is UPF0750 membrane protein YdeO (ydeO) of Bacillus subtilis (strain 168).